An 848-amino-acid polypeptide reads, in one-letter code: MYVIHLAEADESNASISSEEDLGHLDYSKPFAAKQTQPKKSISQIIKDKKKQTQLTLQWLEDNYIVCEGVCLPRCILYAHYLDFCRKEKLDPACAATFGKTIRQKFPLLTTRRLGTRGHSKYHYYGIGIKESSAYYHSVYSGKGLTRFSGSKLKNEGGFTRKYSLSSKTGTLLPEFPSAQHLVLQDSVSKEKVDTLIMMYKTHCQCILDNAINVNFEEIQNFLLHFWQGMPEHLLPLLENPVIVDIFCVCDSILYKVLTDVLIPATMQDMPESLLADIRNFAKHWEHWMLSSLENLPEILSEKKVPIARRFVSSLKRQTSFLHLAQIARPALFDQIVVTSMVNDIDKVDLNSIGSQALLSVTNDQDSDFYSEYDSISVFQELKDLLRKNATVESFIEWLDSVVEQKVIKPSKQNGRSVKKRAQDFLLKWSFFGARVMHNLTLNNATSFGSFHLIRMLLDEYILLAIETQFNNDKEQDLQNLLEKYMRSADASKATFTASPSSCFLANRNKPGVSSSDSAVKDEIPPEDDYLTLAAAQQGLGAGTVVYHSADPDNFTIAGQMDFSQNSAPLMTPPISPAMMNRSSVINQGPMAMRPQTSCPIQGQLPCQTFPEPLYQSLHNPPSGSYPNASYYQPMFRTQTHTESGRYAFSGHHLSKDCFSNSCTASPYGTRGSSGGYTAAGDAGMETEAVQMLESSGFGFGGTTGAADGCSGPVCSSGHRYYGSSSGYVDAPRMGTFIDQHVSVISSVSSIRSVSAYAEAHDPLNILDDTSRKTRPYYTELSAMGTHTAGSSIAHSCSVSAPCMYGAPAPYHSQNTLLPLQGATEIREMMSSLPPINTVFMGSTSGPP.

Positions 56 to 131 form a DNA-binding region, RFX-type winged-helix; it reads TLQWLEDNYI…YHYYGIGIKE (76 aa).

The protein belongs to the RFX family. As to expression, expressed in progenitors and hormone expressing cells of the islet lineage.

The protein resides in the nucleus. Its function is as follows. Transcription factor required to direct islet cell differentiation during endocrine pancreas development. This chain is DNA-binding protein RFX6 (rfx6), found in Danio rerio (Zebrafish).